A 475-amino-acid polypeptide reads, in one-letter code: Ribulose bisphosphate carboxylase large chain (475 aa).

The propeptide occupies 1-2 (MS). The residue at position 3 (proline 3) is an N-acetylproline. Lysine 14 carries the post-translational modification N6,N6,N6-trimethyllysine. Positions 123 and 173 each coordinate substrate. The active-site Proton acceptor is the lysine 175. Residue lysine 177 coordinates substrate. Lysine 201, aspartate 203, and glutamate 204 together coordinate Mg(2+). At lysine 201 the chain carries N6-carboxylysine. Catalysis depends on histidine 294, which acts as the Proton acceptor. Substrate is bound by residues arginine 295, histidine 327, and serine 379.

Belongs to the RuBisCO large chain family. Type I subfamily. As to quaternary structure, heterohexadecamer of 8 large chains and 8 small chains; disulfide-linked. The disulfide link is formed within the large subunit homodimers. The cofactor is Mg(2+). Post-translationally, the disulfide bond which can form in the large chain dimeric partners within the hexadecamer appears to be associated with oxidative stress and protein turnover.

The protein localises to the plastid. Its subcellular location is the chloroplast. It catalyses the reaction 2 (2R)-3-phosphoglycerate + 2 H(+) = D-ribulose 1,5-bisphosphate + CO2 + H2O. It carries out the reaction D-ribulose 1,5-bisphosphate + O2 = 2-phosphoglycolate + (2R)-3-phosphoglycerate + 2 H(+). RuBisCO catalyzes two reactions: the carboxylation of D-ribulose 1,5-bisphosphate, the primary event in carbon dioxide fixation, as well as the oxidative fragmentation of the pentose substrate in the photorespiration process. Both reactions occur simultaneously and in competition at the same active site. This chain is Ribulose bisphosphate carboxylase large chain, found in Magnolia macrophylla (Bigleaf magnolia).